The following is a 355-amino-acid chain: Nuclear hormone receptor family member nhr-127 (355 aa).

The nuclear receptor DNA-binding region spans 10-86; it reads SIPCEVCKNQ…AGMKAEKIQK (77 aa). 2 NR C4-type zinc fingers span residues 13-33 and 49-69; these read CEVC…CGAC and CKDG…CRYC. Residues 126–355 form the NR LBD domain; the sequence is NPHNASEGCS…IVQIVQNNFY (230 aa).

Belongs to the nuclear hormone receptor family.

It localises to the nucleus. Orphan nuclear receptor. May play a role in modulation of lifespan and immunity. This chain is Nuclear hormone receptor family member nhr-127 (nhr-127), found in Caenorhabditis elegans.